A 787-amino-acid polypeptide reads, in one-letter code: Phenylalanine--tRNA ligase beta subunit (787 aa).

One can recognise a tRNA-binding domain in the interval 39–149; it reads APAFSGVVVA…EDAPVGTNIR (111 aa). One can recognise a B5 domain in the interval 400 to 475; the sequence is PEAKQVGLRL…RVYGYENIPD (76 aa). The Mg(2+) site is built by Asp453, Asp459, Glu462, and Glu463. Positions 694-786 constitute an FDX-ACB domain; it reads SKFQPVRRDL…VATEAGARLR (93 aa).

The protein belongs to the phenylalanyl-tRNA synthetase beta subunit family. Type 1 subfamily. Tetramer of two alpha and two beta subunits. It depends on Mg(2+) as a cofactor.

Its subcellular location is the cytoplasm. The catalysed reaction is tRNA(Phe) + L-phenylalanine + ATP = L-phenylalanyl-tRNA(Phe) + AMP + diphosphate + H(+). This chain is Phenylalanine--tRNA ligase beta subunit, found in Neisseria gonorrhoeae (strain ATCC 700825 / FA 1090).